The primary structure comprises 337 residues: Glyceraldehyde-3-phosphate dehydrogenase 3, cytosolic (337 aa).

The tract at residues 1 to 151 (MAKIKIGING…YKSDINIVSN (151 aa)) is binding to NAD. Residues 13-14 (RI), Asp35, and Arg82 each bind NAD(+). The interval 152–337 (ASCTTNCLAP…DLIRHMNSTK (186 aa)) is catalytic. D-glyceraldehyde 3-phosphate-binding positions include 153–155 (SCT), Thr184, 213–214 (TG), and Arg236. Cys154 acts as the Nucleophile in catalysis. Residue Asn318 coordinates NAD(+).

This sequence belongs to the glyceraldehyde-3-phosphate dehydrogenase family. As to quaternary structure, homotetramer.

The protein localises to the cytoplasm. It carries out the reaction D-glyceraldehyde 3-phosphate + phosphate + NAD(+) = (2R)-3-phospho-glyceroyl phosphate + NADH + H(+). Its pathway is carbohydrate degradation; glycolysis; pyruvate from D-glyceraldehyde 3-phosphate: step 1/5. Its function is as follows. Key enzyme in glycolysis that catalyzes the first step of the pathway by converting D-glyceraldehyde 3-phosphate (G3P) into 3-phospho-D-glyceroyl phosphate. Essential for the maintenance of cellular ATP levels and carbohydrate metabolism. The polypeptide is Glyceraldehyde-3-phosphate dehydrogenase 3, cytosolic (GAPC3) (Zea mays (Maize)).